The sequence spans 598 residues: Nuclear receptor subfamily 4 group A member 2 (598 aa).

Residues 1–22 (MPCVQAQYGSSPQGASPASQSY) form a disordered region. Over residues 8–22 (YGSSPQGASPASQSY) the composition is skewed to low complexity. The segment at residues 260–335 (EGLCAVCGDN…VGMVKEVVRT (76 aa)) is a DNA-binding region (nuclear receptor). 2 consecutive NR C4-type zinc fingers follow at residues 263–283 (CAVC…CEGC) and 299–323 (CLAN…FQKC). Positions 287-314 (FKRTVQKNAKYVCLANKNCPVDKRRRNR) match the Bipartite nuclear localization signal (NLS1) motif. A disordered region spans residues 337-361 (SLKGRRGRLPSKPKSPQDPSPPSPP). The Nuclear localization signal (NLS1) signature appears at 338 to 350 (LKGRRGRLPSKPK). Over residues 352-361 (PQDPSPPSPP) the composition is skewed to pro residues. The 236-residue stretch at 360–595 (PPVSLISALV…AIIDKLFLDT (236 aa)) folds into the NR LBD domain. A nuclear export sequence (NES1) motif is present at residues 443 to 452 (FLELFVLRLA). The nuclear export sequence (NES2) motif lies at 568-577 (QGLQRIFYLK).

The protein belongs to the nuclear hormone receptor family. NR4 subfamily. As to quaternary structure, interacts with SFPQ, NCOR2, SIN3A and HADC1. The interaction with NCOR2 increases in the absence of PITX3. Interacts with PER2. As to expression, brain.

It is found in the cytoplasm. It localises to the nucleus. Its function is as follows. Transcriptional regulator which is important for the differentiation and maintenance of meso-diencephalic dopaminergic (mdDA) neurons during development. It is crucial for expression of a set of genes such as SLC6A3, SLC18A2, TH and DRD2 which are essential for development of mdDA neurons. This Mus musculus (Mouse) protein is Nuclear receptor subfamily 4 group A member 2 (Nr4a2).